Consider the following 311-residue polypeptide: Cytosolic Fe-S cluster assembly factor Nubp1 homolog (311 aa).

A disordered region spans residues 1–20; that stretch reads MQAPPPEHCPGVESENAGKG. Positions 9, 23, 26, and 32 each coordinate [4Fe-4S] cluster. 63–70 is a binding site for ATP; the sequence is GKGGVGKS. 2 residues coordinate [4Fe-4S] cluster: cysteine 240 and cysteine 243.

It belongs to the Mrp/NBP35 ATP-binding proteins family. NUBP1/NBP35 subfamily. Heterotetramer of 2 Nubp1 and 2 Nubp2 chains. [4Fe-4S] cluster serves as cofactor.

Its subcellular location is the cytoplasm. Its function is as follows. Component of the cytosolic iron-sulfur (Fe/S) protein assembly (CIA) machinery. Required for maturation of extramitochondrial Fe-S proteins. The Nubp1-Nubp2 heterotetramer forms a Fe-S scaffold complex, mediating the de novo assembly of an Fe-S cluster and its transfer to target apoproteins. The protein is Cytosolic Fe-S cluster assembly factor Nubp1 homolog of Drosophila simulans (Fruit fly).